A 325-amino-acid chain; its full sequence is 6-phosphogluconolactonase 3, chloroplastic (325 aa).

The transit peptide at 1–68 (MASSSCFLRS…KSSDTRRKVK (68 aa)) directs the protein to the chloroplast. The interval 51 to 73 (SIGTGSTKKSSDTRRKVKSMATT) is disordered. Positions 323 to 325 (SKL) match the Microbody targeting signal motif.

It belongs to the glucosamine/galactosamine-6-phosphate isomerase family. 6-phosphogluconolactonase subfamily. As to quaternary structure, interacts with TRXM2. As to expression, expressed in roots, leaves and shoots.

The protein resides in the plastid. It is found in the chloroplast. Its subcellular location is the peroxisome. The enzyme catalyses 6-phospho-D-glucono-1,5-lactone + H2O = 6-phospho-D-gluconate + H(+). It functions in the pathway carbohydrate degradation; pentose phosphate pathway; D-ribulose 5-phosphate from D-glucose 6-phosphate (oxidative stage): step 2/3. Catalyzes the hydrolysis of 6-phosphogluconolactone to 6-phosphogluconate. Involved in the regulation of cellular redox state; enzymatic activity is required for this function. Required for sugar-dependent expression of nitrate assimilation genes in the nucleus of root cells. The protein is 6-phosphogluconolactonase 3, chloroplastic of Arabidopsis thaliana (Mouse-ear cress).